The chain runs to 373 residues: tRNA-specific 2-thiouridylase MnmA (373 aa).

Residues 12 to 19 (GMSGGVDS) and M38 contribute to the ATP site. The interaction with target base in tRNA stretch occupies residues 98–100 (NPD). C103 (nucleophile) is an active-site residue. A disulfide bridge links C103 with C200. Residue G127 coordinates ATP. The interval 150-152 (KDQ) is interaction with tRNA. C200 functions as the Cysteine persulfide intermediate in the catalytic mechanism. The segment at 312–313 (RY) is interaction with tRNA.

It belongs to the MnmA/TRMU family.

The protein localises to the cytoplasm. The enzyme catalyses S-sulfanyl-L-cysteinyl-[protein] + uridine(34) in tRNA + AH2 + ATP = 2-thiouridine(34) in tRNA + L-cysteinyl-[protein] + A + AMP + diphosphate + H(+). Its function is as follows. Catalyzes the 2-thiolation of uridine at the wobble position (U34) of tRNA, leading to the formation of s(2)U34. The polypeptide is tRNA-specific 2-thiouridylase MnmA (Streptococcus pneumoniae (strain 70585)).